We begin with the raw amino-acid sequence, 187 residues long: Elongation factor P (187 aa).

Belongs to the elongation factor P family.

The protein localises to the cytoplasm. It functions in the pathway protein biosynthesis; polypeptide chain elongation. In terms of biological role, involved in peptide bond synthesis. Stimulates efficient translation and peptide-bond synthesis on native or reconstituted 70S ribosomes in vitro. Probably functions indirectly by altering the affinity of the ribosome for aminoacyl-tRNA, thus increasing their reactivity as acceptors for peptidyl transferase. This Corynebacterium efficiens (strain DSM 44549 / YS-314 / AJ 12310 / JCM 11189 / NBRC 100395) protein is Elongation factor P.